The chain runs to 416 residues: Gamma-glutamyl phosphate reductase (416 aa).

Belongs to the gamma-glutamyl phosphate reductase family.

Its subcellular location is the cytoplasm. It catalyses the reaction L-glutamate 5-semialdehyde + phosphate + NADP(+) = L-glutamyl 5-phosphate + NADPH + H(+). It functions in the pathway amino-acid biosynthesis; L-proline biosynthesis; L-glutamate 5-semialdehyde from L-glutamate: step 2/2. Catalyzes the NADPH-dependent reduction of L-glutamate 5-phosphate into L-glutamate 5-semialdehyde and phosphate. The product spontaneously undergoes cyclization to form 1-pyrroline-5-carboxylate. This Leptospira borgpetersenii serovar Hardjo-bovis (strain JB197) protein is Gamma-glutamyl phosphate reductase.